The sequence spans 82 residues: Putative Fe(2+) transport protein A (82 aa).

This sequence belongs to the FeoA family.

Its function is as follows. Might be involved in Fe(2+) ion uptake. The protein is Putative Fe(2+) transport protein A of Leptolyngbya boryana (Plectonema boryanum).